Reading from the N-terminus, the 292-residue chain is Polyketide transferase af380 (292 aa).

The segment at 46–267 (DVAVWFQQQG…FDLVAGRGHM (222 aa)) is abhydrolase domain.

Belongs to the polyketide transferase af380 family.

It carries out the reaction fumagillol + dodecapentaneoyl-[polyketide synthase] = prefumagillin + holo-[polyketide synthase]. The protein operates within secondary metabolite biosynthesis; terpenoid biosynthesis. Functionally, polyketide transferase; part of the gene cluster that mediates the biosynthesis of fumagillin, a meroterpenoid that has numerous biological activities including irreversible inhibition of human type 2 methionine aminopeptidase (METAP2). Within the pathway, the polyketide transferase af380 catalyzes the transfer of a dodecapentaenoyl group synthesized by the polyketide synthase af370 onto 5R-hydroxy-seco-sesquiterpene to produce prefumagillin. The pathway begins with the conversion of farnesyl pyrophosphate (FPP) to beta-trans-bergamotene by the membrane-bound beta-trans-bergamotene synthase af520. The multifunctional cytochrome P450 monooxygenase af510 then converts beta-trans-bergamotene into 5-keto-demethoxyfumagillol via several oxydation steps. 5-keto-demethoxyfumagillol is then subjected to successive C-6 hydroxylation and O-methylation by the dioxygenase af480 and O-methyltransferase af390-400, respectively, to yield 5-keto-fumagillol, which is then stereoselectively reduced by the keto-reductase af490 to 5R-hydroxy-seco-sesquiterpene. The next step is the polyketide transferase af380-catalyzed transfer of a dodecapentaenoyl group synthesized by the polyketide synthase af370 onto 5R-hydroxy-seco-sesquiterpene which leads to the production of prefumagillin. Finally, oxidative cleavage by the monooxygenase af470 converts prefumagillin to fumagillin. The protein is Polyketide transferase af380 of Aspergillus fumigatus (strain ATCC MYA-4609 / CBS 101355 / FGSC A1100 / Af293) (Neosartorya fumigata).